Here is a 93-residue protein sequence, read N- to C-terminus: Small ribosomal subunit protein uS19c (93 aa).

Belongs to the universal ribosomal protein uS19 family.

It localises to the plastid. The protein resides in the chloroplast. Functionally, protein S19 forms a complex with S13 that binds strongly to the 16S ribosomal RNA. The sequence is that of Small ribosomal subunit protein uS19c from Tetradesmus obliquus (Green alga).